The chain runs to 1140 residues: Multiple epidermal growth factor-like domains protein 10 (1140 aa).

The N-terminal stretch at 1–25 is a signal peptide; that stretch reads MVISLNSCLSFICLLLCHWIGTASP. The segment at 1–857 is necessary for interaction with AP2M1, self-assembly and formation of the irregular, mosaic-like adhesion pattern; that stretch reads MVISLNSCLS…ALPADSYQIG (857 aa). The Extracellular portion of the chain corresponds to 26-857; that stretch reads LNLEDPNVCS…ALPADSYQIG (832 aa). The 78-residue stretch at 30–107 folds into the EMI domain; the sequence is DPNVCSHWES…FYESGEMCVP (78 aa). 48 disulfide bridges follow: Cys34–Cys95, Cys60–Cys69, Cys94–Cys105, Cys109–Cys118, Cys113–Cys124, Cys126–Cys135, Cys148–Cys160, Cys154–Cys167, Cys169–Cys178, Cys191–Cys203, Cys197–Cys210, Cys212–Cys221, Cys234–Cys246, Cys240–Cys253, Cys255–Cys264, Cys281–Cys289, Cys283–Cys296, Cys298–Cys307, Cys320–Cys332, Cys326–Cys339, Cys341–Cys350, Cys409–Cys421, Cys415–Cys428, Cys430–Cys439, Cys456–Cys464, Cys458–Cys471, Cys473–Cys482, Cys495–Cys507, Cys501–Cys514, Cys516–Cys525, Cys542–Cys550, Cys544–Cys557, Cys559–Cys568, Cys581–Cys593, Cys587–Cys600, Cys602–Cys611, Cys669–Cys681, Cys675–Cys688, Cys690–Cys699, Cys716–Cys724, Cys718–Cys731, Cys733–Cys742, Cys755–Cys767, Cys761–Cys774, Cys776–Cys785, Cys802–Cys810, Cys804–Cys817, and Cys819–Cys828. EGF-like domains lie at 106 to 136, 144 to 179, 187 to 222, 230 to 265, 278 to 308, 316 to 351, 405 to 440, 453 to 483, 491 to 526, 539 to 569, 577 to 612, 665 to 700, 713 to 743, 751 to 786, and 799 to 829; these read VPHCADKCVHGRCIAPNTCQCEPGWGGTNCS, WGPHCTSRCQCKNGALCNPITGACHCAAGFRGWRCE, YGNDCHQRCQCQNGATCDHVTGECRCPPGYTGAFCE, HGPQCEQRCPCQNGGVCHHVTGECSCPSGWMGTVCG, SQECQCHNGGTCDAATGQCHCSPGYTGERCQ, YGVLCAETCQCVNGGKCYHVSGACLCEAGFAGERCE, YGEACQQICSCQNGADCDSVTGKCTCAPGFKGIDCS, SSRCGCKNDAVCSPVDGSCTCKAGWHGVDCS, WGFGCNLTCQCLNGGACNTLDGTCTCAPGWRGEKCE, AERCDCSHADGCHPTTGHCRCLPGWSGVHCD, WGPNCSLPCYCKNGASCSPDDGICECAPGFRGTTCQ, FGKNCAGICTCTNNGTCNPIDRSCQCYPGWIGSDCS, IHTCNCHNGAFCSAYDGECKCTPGWTGLYCT, YGKDCALICQCQNGADCDHISGQCTCRTGFMGRHCE, and RQICDCLNNSTCDHITGTCYCSPGWKGARCD. An N-linked (GlcNAc...) asparagine glycan is attached at Asn134. N-linked (GlcNAc...) asparagine glycosylation is present at Asn496. The chain crosses the membrane as a helical span at residues 858-878; the sequence is AIAGIIILVLVVLFLLALFII. The Cytoplasmic portion of the chain corresponds to 879-1140; the sequence is YRHKQKGKES…SSSNSSSSSE (262 aa). The necessary for formation of large intracellular vacuoles stretch occupies residues 945–1140; it reads RDRMTVTKSK…SSSNSSSSSE (196 aa). Tyr1030 carries the phosphotyrosine; by SRC modification. The tract at residues 1111–1140 is disordered; the sequence is YDLLPVRDSSSSPKQEDSGGSSSNSSSSSE. A compositionally biased stretch (low complexity) spans 1128 to 1140; the sequence is SGGSSSNSSSSSE.

It belongs to the MEGF family. In terms of assembly, homomer. Interacts with GULP1 and ABCA1. Interacts with AP2M1. Does not interact with MEGF11. Binds with high affinity to complement C1q. Interacts (via the cytoplasmic domain) with NOTCH1 (via NICD domain). Post-translationally, phosphorylated on tyrosine residues. Phosphorylation at Tyr-1030 may be important for muscle cell proliferation. Ubiquitinated; mono- and polyubiquitinated forms are detected. Expressed in muscle (at protein level).

The protein localises to the cell membrane. The protein resides in the cell projection. It localises to the phagocytic cup. Membrane receptor involved in phagocytosis by macrophages and astrocytes of apoptotic cells. Receptor for C1q, an eat-me signal, that binds phosphatidylserine expressed on the surface of apoptotic cells. Cooperates with ABCA1 within the process of engulfment. Promotes the formation of large intracellular vacuoles and may be responsible for the uptake of amyloid-beta peptides. Necessary for astrocyte-dependent apoptotic neuron clearance in the developing cerebellum. Plays role in muscle cell proliferation, adhesion and motility. Is also an essential factor in the regulation of myogenesis. Controls the balance between skeletal muscle satellite cells proliferation and differentiation through regulation of the notch signaling pathway. May also function in the mosaic spacing of specific neuron subtypes in the retina through homotypic retinal neuron repulsion. Mosaics provide a mechanism to distribute each cell type evenly across the retina, ensuring that all parts of the visual field have access to a full set of processing elements. This chain is Multiple epidermal growth factor-like domains protein 10, found in Homo sapiens (Human).